The chain runs to 474 residues: UDP-N-acetylmuramate--L-alanine ligase (474 aa).

116-122 (GTHGKTT) contacts ATP.

Belongs to the MurCDEF family.

The protein localises to the cytoplasm. The enzyme catalyses UDP-N-acetyl-alpha-D-muramate + L-alanine + ATP = UDP-N-acetyl-alpha-D-muramoyl-L-alanine + ADP + phosphate + H(+). The protein operates within cell wall biogenesis; peptidoglycan biosynthesis. In terms of biological role, cell wall formation. The protein is UDP-N-acetylmuramate--L-alanine ligase of Hyphomonas neptunium (strain ATCC 15444).